Reading from the N-terminus, the 94-residue chain is ATP synthase subunit c (94 aa).

The next 2 membrane-spanning stretches (helical) occupy residues 15-35 (VSVG…WGLI) and 61-81 (GGLM…FIFA).

The protein belongs to the ATPase C chain family. In terms of assembly, F-type ATPases have 2 components, F(1) - the catalytic core - and F(0) - the membrane proton channel. F(1) has five subunits: alpha(3), beta(3), gamma(1), delta(1), epsilon(1). F(0) has three main subunits: a(1), b(2) and c(10-14). The alpha and beta chains form an alternating ring which encloses part of the gamma chain. F(1) is attached to F(0) by a central stalk formed by the gamma and epsilon chains, while a peripheral stalk is formed by the delta and b chains.

The protein resides in the cell inner membrane. Functionally, f(1)F(0) ATP synthase produces ATP from ADP in the presence of a proton or sodium gradient. F-type ATPases consist of two structural domains, F(1) containing the extramembraneous catalytic core and F(0) containing the membrane proton channel, linked together by a central stalk and a peripheral stalk. During catalysis, ATP synthesis in the catalytic domain of F(1) is coupled via a rotary mechanism of the central stalk subunits to proton translocation. Key component of the F(0) channel; it plays a direct role in translocation across the membrane. A homomeric c-ring of between 10-14 subunits forms the central stalk rotor element with the F(1) delta and epsilon subunits. The protein is ATP synthase subunit c of Nitrosococcus oceani (strain ATCC 19707 / BCRC 17464 / JCM 30415 / NCIMB 11848 / C-107).